The following is a 349-amino-acid chain: MSTLELHHIGKSYQSVMVLDRIDLHVPPGSRTAIVGPSGSGKTTLLRIIAGFETPDAGKVILQGKAMFDGTTYVPAHKRGIGFVPQDGALFPHFTVAGNIGYGLKGSQRDKERRINELMDMVALDRRLSALWPHEISGGQQQRVALARALAQRPVLMLLDEPFSALDTALRASTRKAVAELLSEANIASILVTHDQTEALSFADQVAVMRAGKLAHVGPPQELYLRPVDEPTATFLGETLMLTAQLGTGLAHCALGQVKVDNPHRRGEARIMLRPEQITLTPLRPEQYNAASCLAKVVAIDFAGFISTLTLQIISSGETIEIKTISREDLHVGLTVGLDIMGQAHIFAE.

Residues 4-236 form the ABC transporter domain; the sequence is LELHHIGKSY…PVDEPTATFL (233 aa). 36–43 lines the ATP pocket; that stretch reads GPSGSGKT.

This sequence belongs to the ABC transporter superfamily. Fe(3+) ion importer (TC 3.A.1.10) family. As to quaternary structure, the complex is composed of two ATP-binding proteins (FbpC), two transmembrane proteins (FbpB) and a solute-binding protein (FbpA).

The protein resides in the cell inner membrane. The catalysed reaction is Fe(3+)(out) + ATP + H2O = Fe(3+)(in) + ADP + phosphate + H(+). Its function is as follows. Part of the ABC transporter complex FbpABC involved in Fe(3+) ions import. Responsible for energy coupling to the transport system. The polypeptide is Fe(3+) ions import ATP-binding protein FbpC (Yersinia pseudotuberculosis serotype I (strain IP32953)).